The chain runs to 696 residues: Putative zinc metalloproteinase YIL108W (696 aa).

Residue lysine 245 forms a Glycyl lysine isopeptide (Lys-Gly) (interchain with G-Cter in ubiquitin) linkage. Histidine 318 lines the Zn(2+) pocket. Residue glutamate 319 is part of the active site. 2 residues coordinate Zn(2+): histidine 322 and histidine 328. The residue at position 361 (serine 361) is a Phosphoserine. Glycyl lysine isopeptide (Lys-Gly) (interchain with G-Cter in ubiquitin) cross-links involve residues lysine 478, lysine 518, lysine 579, lysine 590, and lysine 596. A Jacalin-type lectin domain is found at 522-695; sequence GIKSPLYGRS…VDAFGIIYGA (174 aa).

This sequence belongs to the peptidase M10B family. Requires Zn(2+) as cofactor.

It is found in the cytoplasm. In Saccharomyces cerevisiae (strain ATCC 204508 / S288c) (Baker's yeast), this protein is Putative zinc metalloproteinase YIL108W.